Consider the following 507-residue polypeptide: ATP synthase subunit alpha, chloroplastic (507 aa).

170–177 (GDRQTGKT) lines the ATP pocket.

This sequence belongs to the ATPase alpha/beta chains family. As to quaternary structure, F-type ATPases have 2 components, CF(1) - the catalytic core - and CF(0) - the membrane proton channel. CF(1) has five subunits: alpha(3), beta(3), gamma(1), delta(1), epsilon(1). CF(0) has four main subunits: a, b, b' and c.

It is found in the plastid. It localises to the chloroplast thylakoid membrane. It carries out the reaction ATP + H2O + 4 H(+)(in) = ADP + phosphate + 5 H(+)(out). Its function is as follows. Produces ATP from ADP in the presence of a proton gradient across the membrane. The alpha chain is a regulatory subunit. This is ATP synthase subunit alpha, chloroplastic from Vitis vinifera (Grape).